Consider the following 360-residue polypeptide: BOLA class I histocompatibility antigen, alpha chain BL3-6 (360 aa).

Positions 1-21 (MGPRALLLLLSGVLILTETRA) are cleaved as a signal peptide. The interval 22-111 (GSHSLRYFST…LRGYYNQSEA (90 aa)) is alpha-1. The Extracellular portion of the chain corresponds to 22 to 308 (GSHSLRYFST…QPSFLTMGII (287 aa)). Asn107 is a glycosylation site (N-linked (GlcNAc...) asparagine). Residues 112-203 (GSHTLQWMSG…ENGKDTLLRA (92 aa)) form an alpha-2 region. 2 cysteine pairs are disulfide-bonded: Cys122–Cys185 and Cys224–Cys280. An alpha-3 region spans residues 204–295 (DPPKAHVTHH…GLQEPLTLRW (92 aa)). The Ig-like C1-type domain occupies 206–292 (PKAHVTHHPI…QHEGLQEPLT (87 aa)). A connecting peptide region spans residues 296–308 (EPPQPSFLTMGII). Residues 309 to 328 (VGLVLLVVTGAVVAGVVICM) form a helical membrane-spanning segment. Residues 329–360 (KKRSGEKGGNYIQASSSDSAQGSDVSLTVPKV) are Cytoplasmic-facing. The interval 340 to 360 (IQASSSDSAQGSDVSLTVPKV) is disordered. Over residues 341-354 (QASSSDSAQGSDVS) the composition is skewed to low complexity. Phosphoserine is present on residues Ser351 and Ser354.

The protein belongs to the MHC class I family. Heterodimer of an alpha chain and a beta chain (beta-2-microglobulin).

The protein localises to the membrane. Involved in the presentation of foreign antigens to the immune system. The protein is BOLA class I histocompatibility antigen, alpha chain BL3-6 of Bos taurus (Bovine).